Consider the following 200-residue polypeptide: ATP-dependent Clp protease proteolytic subunit 2 (200 aa).

Serine 100 (nucleophile) is an active-site residue.

It belongs to the peptidase S14 family. Fourteen ClpP subunits assemble into 2 heptameric rings which stack back to back to give a disk-like structure with a central cavity, resembling the structure of eukaryotic proteasomes.

It is found in the cytoplasm. The enzyme catalyses Hydrolysis of proteins to small peptides in the presence of ATP and magnesium. alpha-casein is the usual test substrate. In the absence of ATP, only oligopeptides shorter than five residues are hydrolyzed (such as succinyl-Leu-Tyr-|-NHMec, and Leu-Tyr-Leu-|-Tyr-Trp, in which cleavage of the -Tyr-|-Leu- and -Tyr-|-Trp bonds also occurs).. In terms of biological role, cleaves peptides in various proteins in a process that requires ATP hydrolysis. Has a chymotrypsin-like activity. Plays a major role in the degradation of misfolded proteins. The polypeptide is ATP-dependent Clp protease proteolytic subunit 2 (Streptomyces avermitilis (strain ATCC 31267 / DSM 46492 / JCM 5070 / NBRC 14893 / NCIMB 12804 / NRRL 8165 / MA-4680)).